Consider the following 482-residue polypeptide: U2 small nuclear ribonucleoprotein auxiliary factor 35 kDa subunit-related protein 2 (482 aa).

Residues 1 to 59 form a disordered region; sequence MAAPEKMTFPEKPSHKKYRAALKKEKRKKRRQELARLRDSGLSQKEEEEDTFIEEQQLE. The span at 14–31 shows a compositional bias: basic residues; the sequence is SHKKYRAALKKEKRKKRR. Residue K45 forms a Glycyl lysine isopeptide (Lys-Gly) (interchain with G-Cter in SUMO2) linkage. The segment covering 46-58 has biased composition (acidic residues); sequence EEEEDTFIEEQQL. K62 is covalently cross-linked (Glycyl lysine isopeptide (Lys-Gly) (interchain with G-Cter in SUMO2)). Residues 115-135 are disordered; that stretch reads QRKEREEEEQKRQEKKEKEEA. A C3H1-type 1 zinc finger spans residues 166-194; that stretch reads EKDRANCPFYSKTGACRFGDRCSRKHNFP. Positions 198-304 constitute an RRM domain; it reads PTLLIKSMFT…RQLQCEFCPV (107 aa). The C3H1-type 2 zinc finger occupies 306–333; that stretch reads RWKMAICGLFEIQQCPRGKHCNFLHVFR. S349 bears the Phosphoserine mark. A disordered region spans residues 351-482; it reads DRTGSSFGKN…DRTVQSPKSK (132 aa). Composition is skewed to basic and acidic residues over residues 360 to 375 and 383 to 398; these read NSER…DYYS and PSPD…SERK. S384 carries the phosphoserine modification. Residues 399 to 412 are compositionally biased toward basic residues; it reads SSRHRGKKSHKRTS. The segment covering 413-435 has biased composition (basic and acidic residues); the sequence is KSRERHNSRSRGRNRDRSRDRSR. Positions 436-454 are enriched in basic residues; sequence GRGSRSRSRSRSRRSRRSR.

In terms of assembly, component of the U11/U12 snRNPs that are part of the U12-type spliceosome. Interacts (via RS domain) with SRSF1 and SRSF2. Interacts with U2AF2/U2AF65. In terms of processing, phosphorylated in the RS domain by SRPK1. As to expression, widely expressed.

It is found in the nucleus. Pre-mRNA-binding protein required for splicing of both U2- and U12-type introns. Selectively interacts with the 3'-splice site of U2- and U12-type pre-mRNAs and promotes different steps in U2 and U12 intron splicing. Recruited to U12 pre-mRNAs in an ATP-dependent manner and is required for assembly of the pre-spliceosome, a precursor to other spliceosomal complexes. For U2-type introns, it is selectively and specifically required for the second step of splicing. The protein is U2 small nuclear ribonucleoprotein auxiliary factor 35 kDa subunit-related protein 2 (ZRSR2) of Homo sapiens (Human).